The following is a 416-amino-acid chain: Putative pseudouridine transporter (416 aa).

Over 1–2 (MD) the chain is Periplasmic. A helical membrane pass occupies residues 3–23 (IMRSVVGMVVLLAIAFLLSVN). Residues 24 to 31 (KKSISLRT) are Cytoplasmic-facing. A helical transmembrane segment spans residues 32–52 (VGAALLLQIAIGGIMLYFPPG). Residues 53–104 (KWAVEQAALGVHKVMSYSDAGSAFIFGSLVGPKMDVLFDGAGFIFAFRVLPA) lie on the Periplasmic side of the membrane. The helical transmembrane segment at 105–125 (IIFVTALISLLYYIGVMGLLI) threads the bilayer. The Cytoplasmic portion of the chain corresponds to 126 to 172 (RILGSIFQKALNISKIESFVAVTTIFLGQNEIPAIVKPFIDRMNRNE). Residues 173–193 (LFTAICSGMASIAGSMMIGYA) form a helical membrane-spanning segment. The Periplasmic portion of the chain corresponds to 194–196 (GMG). Residues 197-217 (VPIDYLLAASLMAIPGGILFA) form a helical membrane-spanning segment. Residues 218 to 268 (RILSPATEPSQVTFENLSFSETPPKSFIEAAASGAMTGLKIAAGVATVVMA) lie on the Cytoplasmic side of the membrane. The helical transmembrane segment at 269–289 (FVAIIALINGIIGGIGGWFGF) threads the bilayer. At 290-352 (ANASLESIFG…QTGGTLEVKT (63 aa)) the chain is on the periplasmic side. The chain crosses the membrane as a helical span at residues 353–373 (IAIISFALCGFANFGSIGVVV). Topologically, residues 374 to 394 (GAFSAISPKRAPEIAQLGLRA) are cytoplasmic. A helical transmembrane segment spans residues 395-415 (LAAATLSNLMSATIAGFFIGL). Residue alanine 416 is a topological domain, periplasmic.

The protein belongs to the concentrative nucleoside transporter (CNT) (TC 2.A.41) family.

Its subcellular location is the cell inner membrane. Could be involved in pseudouridine transport. This Escherichia coli (strain K12) protein is Putative pseudouridine transporter (psuT).